Here is a 371-residue protein sequence, read N- to C-terminus: tRNA-specific 2-thiouridylase MnmA (371 aa).

ATP contacts are provided by residues 7 to 14 (GLSGGVDS) and methionine 33. An interaction with target base in tRNA region spans residues 103 to 105 (NPD). The active-site Nucleophile is cysteine 108. The cysteines at positions 108 and 201 are disulfide-linked. Residue glycine 133 coordinates ATP. The interval 151 to 153 (KDQ) is interaction with tRNA. Cysteine 201 serves as the catalytic Cysteine persulfide intermediate. The segment at 308–309 (RY) is interaction with tRNA.

It belongs to the MnmA/TRMU family.

Its subcellular location is the cytoplasm. The enzyme catalyses S-sulfanyl-L-cysteinyl-[protein] + uridine(34) in tRNA + AH2 + ATP = 2-thiouridine(34) in tRNA + L-cysteinyl-[protein] + A + AMP + diphosphate + H(+). Its function is as follows. Catalyzes the 2-thiolation of uridine at the wobble position (U34) of tRNA, leading to the formation of s(2)U34. The polypeptide is tRNA-specific 2-thiouridylase MnmA (Mycoplasmopsis pulmonis (strain UAB CTIP) (Mycoplasma pulmonis)).